The following is a 425-amino-acid chain: Serine--tRNA ligase (425 aa).

Position 230 to 232 (230 to 232 (TAE)) interacts with L-serine. ATP is bound at residue 261–263 (RSE). Glu-284 contacts L-serine. ATP is bound at residue 348 to 351 (EISS). Ser-384 contacts L-serine.

The protein belongs to the class-II aminoacyl-tRNA synthetase family. Type-1 seryl-tRNA synthetase subfamily. In terms of assembly, homodimer. The tRNA molecule binds across the dimer.

The protein localises to the cytoplasm. The catalysed reaction is tRNA(Ser) + L-serine + ATP = L-seryl-tRNA(Ser) + AMP + diphosphate + H(+). The enzyme catalyses tRNA(Sec) + L-serine + ATP = L-seryl-tRNA(Sec) + AMP + diphosphate + H(+). The protein operates within aminoacyl-tRNA biosynthesis; selenocysteinyl-tRNA(Sec) biosynthesis; L-seryl-tRNA(Sec) from L-serine and tRNA(Sec): step 1/1. Catalyzes the attachment of serine to tRNA(Ser). Is also able to aminoacylate tRNA(Sec) with serine, to form the misacylated tRNA L-seryl-tRNA(Sec), which will be further converted into selenocysteinyl-tRNA(Sec). This Streptococcus pyogenes serotype M49 (strain NZ131) protein is Serine--tRNA ligase.